Reading from the N-terminus, the 327-residue chain is Phenylalanine--tRNA ligase alpha subunit (327 aa).

Residue Glu-252 participates in Mg(2+) binding.

The protein belongs to the class-II aminoacyl-tRNA synthetase family. Phe-tRNA synthetase alpha subunit type 1 subfamily. Tetramer of two alpha and two beta subunits. It depends on Mg(2+) as a cofactor.

The protein localises to the cytoplasm. The catalysed reaction is tRNA(Phe) + L-phenylalanine + ATP = L-phenylalanyl-tRNA(Phe) + AMP + diphosphate + H(+). The sequence is that of Phenylalanine--tRNA ligase alpha subunit from Shewanella denitrificans (strain OS217 / ATCC BAA-1090 / DSM 15013).